We begin with the raw amino-acid sequence, 85 residues long: Cell division topological specificity factor (85 aa).

It belongs to the MinE family.

Its function is as follows. Prevents the cell division inhibition by proteins MinC and MinD at internal division sites while permitting inhibition at polar sites. This ensures cell division at the proper site by restricting the formation of a division septum at the midpoint of the long axis of the cell. The protein is Cell division topological specificity factor of Chromobacterium violaceum (strain ATCC 12472 / DSM 30191 / JCM 1249 / CCUG 213 / NBRC 12614 / NCIMB 9131 / NCTC 9757 / MK).